A 381-amino-acid chain; its full sequence is tRNA pseudouridine synthase D (381 aa).

Asp-81 acts as the Nucleophile in catalysis. The TRUD domain maps to 160–335 (GMPNYFGSQR…TLGSRRFFWV (176 aa)).

Belongs to the pseudouridine synthase TruD family.

It catalyses the reaction uridine(13) in tRNA = pseudouridine(13) in tRNA. Functionally, responsible for synthesis of pseudouridine from uracil-13 in transfer RNAs. This Helicobacter pylori (strain G27) protein is tRNA pseudouridine synthase D.